Consider the following 772-residue polypeptide: Acyl-homoserine lactone acylase PvdQ (772 aa).

An N-terminal signal peptide occupies residues 1-28; the sequence is MPVFPFCRPMTCAGLAAALVAFSVGVQA. The propeptide at 199–220 is spacer peptide; sequence AQSSAGFASALARQERFAAERG. Ser-221 functions as the Nucleophile in the catalytic mechanism.

This sequence belongs to the peptidase S45 family. As to quaternary structure, heterodimer of an alpha subunit and a beta subunit processed from the same precursor.

The protein resides in the periplasm. The catalysed reaction is an N-acyl-L-homoserine lactone + H2O = L-homoserine lactone + a carboxylate. Catalyzes the deacylation of acyl-homoserine lactone (AHL or acyl-HSL), releasing homoserine lactone (HSL) and the corresponding fatty acid. Possesses a specificity for the degradation of long-chain acyl-HSLs (side chains of 11 to 14 carbons in length). The chain is Acyl-homoserine lactone acylase PvdQ (pvdQ) from Pseudomonas putida (strain ATCC 47054 / DSM 6125 / CFBP 8728 / NCIMB 11950 / KT2440).